Consider the following 329-residue polypeptide: Glycerol-3-phosphate dehydrogenase [NAD(P)+] (329 aa).

Positions 10, 11, 31, and 105 each coordinate NADPH. Residues Lys-105, Gly-134, and Ser-136 each contribute to the sn-glycerol 3-phosphate site. Ala-138 contacts NADPH. The sn-glycerol 3-phosphate site is built by Lys-189, Asp-242, Ser-252, Arg-253, and Asn-254. Residue Lys-189 is the Proton acceptor of the active site. Residue Arg-253 coordinates NADPH. The NADPH site is built by Val-277 and Glu-279.

This sequence belongs to the NAD-dependent glycerol-3-phosphate dehydrogenase family.

It is found in the cytoplasm. It catalyses the reaction sn-glycerol 3-phosphate + NAD(+) = dihydroxyacetone phosphate + NADH + H(+). It carries out the reaction sn-glycerol 3-phosphate + NADP(+) = dihydroxyacetone phosphate + NADPH + H(+). It functions in the pathway membrane lipid metabolism; glycerophospholipid metabolism. Catalyzes the reduction of the glycolytic intermediate dihydroxyacetone phosphate (DHAP) to sn-glycerol 3-phosphate (G3P), the key precursor for phospholipid synthesis. This Neisseria meningitidis serogroup A / serotype 4A (strain DSM 15465 / Z2491) protein is Glycerol-3-phosphate dehydrogenase [NAD(P)+].